Consider the following 434-residue polypeptide: Adenylosuccinate synthetase (434 aa).

GTP-binding positions include glycine 14–lysine 20 and glycine 42–glutamate 44. Aspartate 15 serves as the catalytic Proton acceptor. Positions 15 and 42 each coordinate Mg(2+). IMP-binding positions include aspartate 15–lysine 18, asparagine 40–histidine 43, threonine 133, arginine 147, asparagine 229, threonine 244, and arginine 308. Histidine 43 (proton donor) is an active-site residue. Valine 304–arginine 310 lines the substrate pocket. GTP is bound by residues arginine 310, lysine 336–aspartate 338, and glycine 422–glycine 424.

The protein belongs to the adenylosuccinate synthetase family. Homodimer. Requires Mg(2+) as cofactor.

Its subcellular location is the cytoplasm. The catalysed reaction is IMP + L-aspartate + GTP = N(6)-(1,2-dicarboxyethyl)-AMP + GDP + phosphate + 2 H(+). It functions in the pathway purine metabolism; AMP biosynthesis via de novo pathway; AMP from IMP: step 1/2. In terms of biological role, plays an important role in the salvage pathway for purine nucleotide biosynthesis. Catalyzes the first committed step in the biosynthesis of AMP from IMP. This chain is Adenylosuccinate synthetase, found in Theileria parva (East coast fever infection agent).